Here is a 219-residue protein sequence, read N- to C-terminus: Large ribosomal subunit protein uL1 (219 aa).

It belongs to the universal ribosomal protein uL1 family. As to quaternary structure, component of the large ribosomal subunit.

Its subcellular location is the cytoplasm. In Encephalitozoon cuniculi (strain GB-M1) (Microsporidian parasite), this protein is Large ribosomal subunit protein uL1 (RPL1).